Here is a 198-residue protein sequence, read N- to C-terminus: Recombination protein RecR (198 aa).

The C4-type zinc-finger motif lies at cysteine 57–cysteine 72. One can recognise a Toprim domain in the interval serine 80–alanine 175.

The protein belongs to the RecR family.

May play a role in DNA repair. It seems to be involved in an RecBC-independent recombinational process of DNA repair. It may act with RecF and RecO. The chain is Recombination protein RecR from Streptococcus sanguinis (strain SK36).